A 33-amino-acid chain; its full sequence is Putative tumor antigen NA88-A (33 aa).

As to expression, expressed in testis and melanoma cell lines.

In Homo sapiens (Human), this protein is Putative tumor antigen NA88-A (VENTXP1).